The following is a 215-amino-acid chain: Large ribosomal subunit protein uL4 (215 aa).

The segment at 43-97 is disordered; it reads RRQGTHSTKTRAEVSGGGKKPWRQKGTGRARAGSTRSPIWVGGGKTHTPKPRDYS.

It belongs to the universal ribosomal protein uL4 family. As to quaternary structure, part of the 50S ribosomal subunit.

Its function is as follows. One of the primary rRNA binding proteins, this protein initially binds near the 5'-end of the 23S rRNA. It is important during the early stages of 50S assembly. It makes multiple contacts with different domains of the 23S rRNA in the assembled 50S subunit and ribosome. Forms part of the polypeptide exit tunnel. This is Large ribosomal subunit protein uL4 from Brachyspira hyodysenteriae (strain ATCC 49526 / WA1).